A 355-amino-acid polypeptide reads, in one-letter code: Holliday junction branch migration complex subunit RuvB (355 aa).

Residues 1–43 are disordered; it reads MEEMDDFTVRRGEREDITGAAGPPEERPLDPAAFEEDDEPTLR. The interval 4 to 203 is large ATPase domain (RuvB-L); that stretch reads MDDFTVRRGE…FGFSARLDYY (200 aa). Residues 7–17 are compositionally biased toward basic and acidic residues; that stretch reads FTVRRGEREDI. Residues L42, R43, G84, K87, T88, S89, 150–152, R193, Y203, and R240 contribute to the ATP site; that span reads EDF. A Mg(2+)-binding site is contributed by T88. Positions 204 to 274 are small ATPAse domain (RuvB-S); it reads EPHELEKIVV…TANAALEMQG (71 aa). The tract at residues 277–355 is head domain (RuvB-H); that stretch reads HLGLDRTDRE…HLGFPVRDGG (79 aa). 3 residues coordinate DNA: R313, R332, and R337.

It belongs to the RuvB family. Homohexamer. Forms an RuvA(8)-RuvB(12)-Holliday junction (HJ) complex. HJ DNA is sandwiched between 2 RuvA tetramers; dsDNA enters through RuvA and exits via RuvB. An RuvB hexamer assembles on each DNA strand where it exits the tetramer. Each RuvB hexamer is contacted by two RuvA subunits (via domain III) on 2 adjacent RuvB subunits; this complex drives branch migration. In the full resolvosome a probable DNA-RuvA(4)-RuvB(12)-RuvC(2) complex forms which resolves the HJ.

It localises to the cytoplasm. The enzyme catalyses ATP + H2O = ADP + phosphate + H(+). Functionally, the RuvA-RuvB-RuvC complex processes Holliday junction (HJ) DNA during genetic recombination and DNA repair, while the RuvA-RuvB complex plays an important role in the rescue of blocked DNA replication forks via replication fork reversal (RFR). RuvA specifically binds to HJ cruciform DNA, conferring on it an open structure. The RuvB hexamer acts as an ATP-dependent pump, pulling dsDNA into and through the RuvAB complex. RuvB forms 2 homohexamers on either side of HJ DNA bound by 1 or 2 RuvA tetramers; 4 subunits per hexamer contact DNA at a time. Coordinated motions by a converter formed by DNA-disengaged RuvB subunits stimulates ATP hydrolysis and nucleotide exchange. Immobilization of the converter enables RuvB to convert the ATP-contained energy into a lever motion, pulling 2 nucleotides of DNA out of the RuvA tetramer per ATP hydrolyzed, thus driving DNA branch migration. The RuvB motors rotate together with the DNA substrate, which together with the progressing nucleotide cycle form the mechanistic basis for DNA recombination by continuous HJ branch migration. Branch migration allows RuvC to scan DNA until it finds its consensus sequence, where it cleaves and resolves cruciform DNA. This chain is Holliday junction branch migration complex subunit RuvB, found in Rubrobacter xylanophilus (strain DSM 9941 / JCM 11954 / NBRC 16129 / PRD-1).